Reading from the N-terminus, the 178-residue chain is Cytochrome b6-f complex iron-sulfur subunit (178 aa).

The chain crosses the membrane as a helical span at residues 20–42 (LLTFGTATGVALGALYPVANYFM). The Rieske domain maps to 65 to 161 (KTGWLASHQA…VDVDDDAVLV (97 aa)). C107, H109, C125, and H128 together coordinate [2Fe-2S] cluster. An intrachain disulfide couples C112 to C127.

It belongs to the Rieske iron-sulfur protein family. As to quaternary structure, the 4 large subunits of the cytochrome b6-f complex are cytochrome b6, subunit IV (17 kDa polypeptide, PetD), cytochrome f and the Rieske protein, while the 4 small subunits are PetG, PetL, PetM and PetN. The complex functions as a dimer. [2Fe-2S] cluster serves as cofactor.

Its subcellular location is the cellular thylakoid membrane. It catalyses the reaction 2 oxidized [plastocyanin] + a plastoquinol + 2 H(+)(in) = 2 reduced [plastocyanin] + a plastoquinone + 4 H(+)(out). Functionally, component of the cytochrome b6-f complex, which mediates electron transfer between photosystem II (PSII) and photosystem I (PSI), cyclic electron flow around PSI, and state transitions. The protein is Cytochrome b6-f complex iron-sulfur subunit of Prochlorococcus marinus subsp. pastoris (strain CCMP1986 / NIES-2087 / MED4).